A 140-amino-acid polypeptide reads, in one-letter code: Putative pre-16S rRNA nuclease (140 aa).

It belongs to the YqgF nuclease family.

It is found in the cytoplasm. Functionally, could be a nuclease involved in processing of the 5'-end of pre-16S rRNA. The chain is Putative pre-16S rRNA nuclease from Yersinia enterocolitica serotype O:8 / biotype 1B (strain NCTC 13174 / 8081).